The chain runs to 146 residues: Cytochrome c-type biogenesis protein CcmE (146 aa).

Topologically, residues 1 to 8 are cytoplasmic; that stretch reads MNPRRKKR. The helical; Signal-anchor for type II membrane protein transmembrane segment at 9 to 29 threads the bilayer; that stretch reads LGLILALVLGASATVGLMLYA. Over 30–146 the chain is Periplasmic; sequence LNQNMDLFYT…EVAEAMKKTH (117 aa). Heme-binding residues include histidine 129 and tyrosine 133.

Belongs to the CcmE/CycJ family.

It is found in the cell inner membrane. Heme chaperone required for the biogenesis of c-type cytochromes. Transiently binds heme delivered by CcmC and transfers the heme to apo-cytochromes in a process facilitated by CcmF and CcmH. The polypeptide is Cytochrome c-type biogenesis protein CcmE (Aliivibrio salmonicida (strain LFI1238) (Vibrio salmonicida (strain LFI1238))).